The primary structure comprises 95 residues: Phosphoribosyl-ATP pyrophosphatase (95 aa).

It belongs to the PRA-PH family.

It is found in the cytoplasm. It carries out the reaction 1-(5-phospho-beta-D-ribosyl)-ATP + H2O = 1-(5-phospho-beta-D-ribosyl)-5'-AMP + diphosphate + H(+). It functions in the pathway amino-acid biosynthesis; L-histidine biosynthesis; L-histidine from 5-phospho-alpha-D-ribose 1-diphosphate: step 2/9. This is Phosphoribosyl-ATP pyrophosphatase from Methanosphaera stadtmanae (strain ATCC 43021 / DSM 3091 / JCM 11832 / MCB-3).